The following is a 238-amino-acid chain: MVNTLANELREGTTKSHSMAENVSFVKSFLGGVVDKKSYRKLVANLYFVYCAIEEELFSNKNHPAIKPIYFTELNRKASLSEDLNYYYGSDWLDFIEPSPATKIYVDRIHTIGHKQPELLVAHAYTRYLGDLSGGQILKKIARGAMNLSDSGGTKFYDFDQIKDDKLFKDQYRAALDMIPLSDVQIQNIVSEANISFTLNMKMFEELNSSSLKIITMLIANTIQKFKAKYKSTLAMVD.

Position 17 (His17) interacts with heme b.

Belongs to the heme oxygenase family.

The protein localises to the plastid. The protein resides in the chloroplast. It carries out the reaction heme b + 3 reduced [NADPH--hemoprotein reductase] + 3 O2 = biliverdin IXalpha + CO + Fe(2+) + 3 oxidized [NADPH--hemoprotein reductase] + 3 H2O + H(+). Catalyzes the opening of the heme ring with the release of iron. Key enzyme in the synthesis of the chromophoric part of the photosynthetic antennae. The chain is Heme oxygenase (pbsA) from Pyropia yezoensis (Susabi-nori).